Reading from the N-terminus, the 178-residue chain is Small ribosomal subunit protein bS16 (178 aa).

The disordered stretch occupies residues 78–178; it reads KLGITQWTAG…AAPAEGEEQA (101 aa). Basic and acidic residues predominate over residues 91–113; that stretch reads KKGEPGQKAKERAEERAQREADR. Positions 114-127 are enriched in low complexity; it reads AAAAAEAAAAPAEE. The segment covering 128-139 has biased composition (acidic residues); that stretch reads APAEEAPAEEAA. A compositionally biased stretch (low complexity) spans 140–172; sequence AEAAPEAAAAEEAPAAEAAAEEAAPAAEEAAPA.

The protein belongs to the bacterial ribosomal protein bS16 family.

The chain is Small ribosomal subunit protein bS16 from Phenylobacterium zucineum (strain HLK1).